Reading from the N-terminus, the 713-residue chain is Oligopeptidase PhomG (713 aa).

His461 provides a ligand contact to Zn(2+). The active site involves Glu462. Positions 465 and 468 each coordinate Zn(2+).

The protein belongs to the peptidase M3 family. As to quaternary structure, monomer. Zn(2+) serves as cofactor.

It participates in mycotoxin biosynthesis. Its function is as follows. Oligopeptidase; part of the gene cluster that mediates the biosynthesis of the phomopsins, a group of hexapeptide mycotoxins which infects lupins and causes lupinosis disease in livestock. Within the pathway, phomG and phomG' are probably involved in the processing of the phomA and phomA' precursors. The pathway starts with the processing of the precursor phomA by several endopeptidases including kexin proteases as well as the cluster-specific S41 family peptidase phomP1 and the oligopeptidase phomG to produce 10 identical copies of the hexapeptide Tyr-Val-Ile-Pro-Ile-Asp. After being excised from the precursor peptide, the core peptides are cyclized and modified post-translationally by enzymes encoded within the gene cluster. The timing and order of proteolysis of the phomA precursor and PTMs are still unknown. Two tyrosinase-like enzymes, phomQ1 and phomQ2, catalyze the chlorination and hydroxylation of Tyr, respectively. PhomYb, is proposed to be involved in the construction of the macrocyclic structure. The other 4 ustYa family proteins may be involved in PTMs that generate the unique structure of phomopsin A. PhomYa is required for the hydroxylation of C-beta of Tyr. PhomYc, phomYd, and phomYe are responsible for the biosynthesis of 2,3-dehydroisoleucine (dIle), 2,3-dehydroaspartic acid (dAsp), and 3,4-dehydroproline (dPro), respectively. While dIle formation by phomYc is indispensable for the installation of dAsp by phomYd, the order of the other PTMs have not been elucidated yet. Most of the biosynthetic enzymes likely have broad substrate specificity, and thus, there might be a metabolic grid from a precursor to phomopsin A. The enzyme(s) responsible for the biosynthesis of 3,4-dehydrovaline (dVal) have also not been identified yet. Finally, phomM acts as an S-adenosylmethionine-dependent alpha-N-methyltransferase that catalyzes two successive N-methylation reactions, converting N-desmethyl-phomopsin A to phomopsin A and phomopsin A further to an N,N-dimethylated congener called phomopsin E. The protein is Oligopeptidase PhomG of Diaporthe leptostromiformis (Lupinosis disease fungus).